The following is an 82-amino-acid chain: UPF0213 protein MW0443 (82 aa).

The 76-residue stretch at 2–77 (DSHFVYIVKC…KTYTRQKKLR (76 aa)) folds into the GIY-YIG domain.

This sequence belongs to the UPF0213 family.

The polypeptide is UPF0213 protein MW0443 (Staphylococcus aureus (strain MW2)).